Reading from the N-terminus, the 364-residue chain is DNA polymerase IV (364 aa).

The UmuC domain maps to Ile-14–Gly-198. Positions 18 and 116 each coordinate Mg(2+). Glu-117 is an active-site residue.

It belongs to the DNA polymerase type-Y family. In terms of assembly, monomer. Mg(2+) is required as a cofactor.

The protein resides in the cytoplasm. It catalyses the reaction DNA(n) + a 2'-deoxyribonucleoside 5'-triphosphate = DNA(n+1) + diphosphate. Functionally, poorly processive, error-prone DNA polymerase involved in untargeted mutagenesis. Copies undamaged DNA at stalled replication forks, which arise in vivo from mismatched or misaligned primer ends. These misaligned primers can be extended by PolIV. Exhibits no 3'-5' exonuclease (proofreading) activity. May be involved in translesional synthesis, in conjunction with the beta clamp from PolIII. In Lactococcus lactis subsp. cremoris (strain SK11), this protein is DNA polymerase IV.